The chain runs to 194 residues: Imidazoleglycerol-phosphate dehydratase (194 aa).

It belongs to the imidazoleglycerol-phosphate dehydratase family.

The protein localises to the cytoplasm. The enzyme catalyses D-erythro-1-(imidazol-4-yl)glycerol 3-phosphate = 3-(imidazol-4-yl)-2-oxopropyl phosphate + H2O. Its pathway is amino-acid biosynthesis; L-histidine biosynthesis; L-histidine from 5-phospho-alpha-D-ribose 1-diphosphate: step 6/9. The chain is Imidazoleglycerol-phosphate dehydratase from Chlorobaculum tepidum (strain ATCC 49652 / DSM 12025 / NBRC 103806 / TLS) (Chlorobium tepidum).